Consider the following 462-residue polypeptide: Integrator complex subunit 12 (462 aa).

The segment at 42 to 132 (GIDSSYRPSQ…PETQSSPITV (91 aa)) is disordered. The span at 59-86 (ISSTKNISIKQEPKISSSLPSGNNNGKV) shows a compositional bias: polar residues. Lys68 participates in a covalent cross-link: Glycyl lysine isopeptide (Lys-Gly) (interchain with G-Cter in SUMO2). Residues 88–124 (TTEKVKKEAEKRPADKMKSDITEGVDIPKKPRLEKPE) are compositionally biased toward basic and acidic residues. Residue Ser128 is modified to Phosphoserine. A PHD-type zinc finger spans residues 159-215 (GLACVVCRQMMVASGNQLVECQECHNLYHRDCHKPQVTDKEANDPRLVWYCARCTRQ). Lys254 is covalently cross-linked (Glycyl lysine isopeptide (Lys-Gly) (interchain with G-Cter in SUMO2)). Over residues 301 to 328 (SSAGPSTAKLSSTTQNNTGKPATSSANQ) the composition is skewed to polar residues. Residues 301–462 (SSAGPSTAKL…KKAAQKKLKK (162 aa)) are disordered. Low complexity-rich tracts occupy residues 347 to 358 (KIGSNNSTTPTV) and 382 to 437 (VSKV…GPTS). Basic residues predominate over residues 449-462 (QMVKKKAAQKKLKK).

The protein belongs to the Integrator subunit 12 family. Component of the Integrator complex, composed of core subunits INTS1, INTS2, INTS3, INTS4, INTS5, INTS6, INTS7, INTS8, INTS9/RC74, INTS10, INTS11/CPSF3L, INTS12, INTS13, INTS14 and INTS15. The core complex associates with protein phosphatase 2A subunits PPP2CA and PPP2R1A, to form the Integrator-PP2A (INTAC) complex. Dephosphorylated at Ser-128 by the PNUTS-PP1 complex, promoting RNA polymerase II transcription pause-release.

It localises to the nucleus. Its function is as follows. Component of the integrator complex, a multiprotein complex that terminates RNA polymerase II (Pol II) transcription in the promoter-proximal region of genes. The integrator complex provides a quality checkpoint during transcription elongation by driving premature transcription termination of transcripts that are unfavorably configured for transcriptional elongation: the complex terminates transcription by (1) catalyzing dephosphorylation of the C-terminal domain (CTD) of Pol II subunit POLR2A/RPB1 and SUPT5H/SPT5, (2) degrading the exiting nascent RNA transcript via endonuclease activity and (3) promoting the release of Pol II from bound DNA. The integrator complex is also involved in terminating the synthesis of non-coding Pol II transcripts, such as enhancer RNAs (eRNAs), small nuclear RNAs (snRNAs), telomerase RNAs and long non-coding RNAs (lncRNAs). Mediates recruitment of cytoplasmic dynein to the nuclear envelope, probably as component of the integrator complex. The polypeptide is Integrator complex subunit 12 (Homo sapiens (Human)).